We begin with the raw amino-acid sequence, 1377 residues long: DNA-directed RNA polymerase subunit beta' (1377 aa).

Residues Cys60, Cys62, Cys75, and Cys78 each coordinate Zn(2+). Positions 449, 451, and 453 each coordinate Mg(2+). Residues Cys777, Cys851, Cys858, and Cys861 each coordinate Zn(2+).

Belongs to the RNA polymerase beta' chain family. As to quaternary structure, the RNAP catalytic core consists of 2 alpha, 1 beta, 1 beta' and 1 omega subunit. When a sigma factor is associated with the core the holoenzyme is formed, which can initiate transcription. It depends on Mg(2+) as a cofactor. Requires Zn(2+) as cofactor.

It carries out the reaction RNA(n) + a ribonucleoside 5'-triphosphate = RNA(n+1) + diphosphate. Functionally, DNA-dependent RNA polymerase catalyzes the transcription of DNA into RNA using the four ribonucleoside triphosphates as substrates. This Borreliella burgdorferi (strain ATCC 35210 / DSM 4680 / CIP 102532 / B31) (Borrelia burgdorferi) protein is DNA-directed RNA polymerase subunit beta'.